The chain runs to 552 residues: ATP synthase subunit alpha, mitochondrial (552 aa).

A mitochondrion-targeting transit peptide spans 1 to 47 (MSIFSARLASSVARNLPKAANQVACKAAYPAASLAARKLHVASTQRS). 211-218 (GDRQTGKT) lines the ATP pocket.

This sequence belongs to the ATPase alpha/beta chains family. As to quaternary structure, F-type ATPases have 2 components, CF(1) - the catalytic core - and CF(0) - the membrane proton channel. CF(1) has five subunits: alpha(3), beta(3), gamma(1), delta(1), epsilon(1). CF(0) has three main subunits: a, b and c.

Its subcellular location is the mitochondrion inner membrane. In terms of biological role, mitochondrial membrane ATP synthase (F(1)F(0) ATP synthase or Complex V) produces ATP from ADP in the presence of a proton gradient across the membrane which is generated by electron transport complexes of the respiratory chain. F-type ATPases consist of two structural domains, F(1) - containing the extramembraneous catalytic core, and F(0) - containing the membrane proton channel, linked together by a central stalk and a peripheral stalk. During catalysis, ATP synthesis in the catalytic domain of F(1) is coupled via a rotary mechanism of the central stalk subunits to proton translocation. Subunits alpha and beta form the catalytic core in F(1). Rotation of the central stalk against the surrounding alpha(3)beta(3) subunits leads to hydrolysis of ATP in three separate catalytic sites on the beta subunits. Subunit alpha does not bear the catalytic high-affinity ATP-binding sites. The sequence is that of ATP synthase subunit alpha, mitochondrial (blw) from Drosophila melanogaster (Fruit fly).